The following is a 185-amino-acid chain: Elongation factor P (185 aa).

It belongs to the elongation factor P family.

It localises to the cytoplasm. Its pathway is protein biosynthesis; polypeptide chain elongation. Its function is as follows. Involved in peptide bond synthesis. Stimulates efficient translation and peptide-bond synthesis on native or reconstituted 70S ribosomes in vitro. Probably functions indirectly by altering the affinity of the ribosome for aminoacyl-tRNA, thus increasing their reactivity as acceptors for peptidyl transferase. This chain is Elongation factor P, found in Anoxybacillus flavithermus (strain DSM 21510 / WK1).